Consider the following 277-residue polypeptide: Protein CMSS1 (277 aa).

Residues Met-1–Ala-14 show a composition bias toward acidic residues. The tract at residues Met-1 to Glu-91 is disordered. Residues Glu-24 to Gly-34 show a composition bias toward basic and acidic residues. Residues Asn-35 to Glu-52 are compositionally biased toward basic residues. Residues Val-53 to Pro-66 show a composition bias toward basic and acidic residues.

Belongs to the CMS1 family.

The chain is Protein CMSS1 (cmss1) from Xenopus laevis (African clawed frog).